A 666-amino-acid polypeptide reads, in one-letter code: ATP-dependent RNA helicase MSS116, mitochondrial (666 aa).

The transit peptide at 1 to 22 (MLRHCSLGLVTTQISAIAPLRL) directs the protein to the mitochondrion. Positions 38–60 (RDRRSSRSREDKPYNSRTRRFDD) are enriched in basic and acidic residues. A disordered region spans residues 38-131 (RDRRSSRSRE…KSYSKGGNTS (94 aa)). Over residues 120–131 (NTKSYSKGGNTS) the composition is skewed to polar residues. A Q motif motif is present at residues 159–187 (SLLEKNVISRDLYDSISRMGFEQLTPVQQ). A Helicase ATP-binding domain is found at 192–379 (PIITNSDSDI…NDIMNKEECL (188 aa)). 205–212 (AKTGTGKT) is a binding site for ATP. The short motif at 320-323 (DEAD) is the DEAD box element. The Helicase C-terminal domain maps to 408–560 (NLYAAIEHIR…NIRKFEAQPH (153 aa)).

This sequence belongs to the DEAD box helicase family. DDX18/HAS1 subfamily.

The protein resides in the mitochondrion matrix. It catalyses the reaction ATP + H2O = ADP + phosphate + H(+). Its function is as follows. ATP-dependent RNA helicase required for mitochondrial splicing of group I and II introns. Also required for efficient mitochondrial translation. This chain is ATP-dependent RNA helicase MSS116, mitochondrial (MSS116), found in Candida glabrata (strain ATCC 2001 / BCRC 20586 / JCM 3761 / NBRC 0622 / NRRL Y-65 / CBS 138) (Yeast).